The chain runs to 457 residues: Probable xyloglucan 6-xylosyltransferase 5 (457 aa).

The interval 1 to 40 is disordered; the sequence is MGQDGSPAHKRPSGSGGGLPTTTLTNGGGRGGRGGLLPRG. The Cytoplasmic segment spans residues 1-51; the sequence is MGQDGSPAHKRPSGSGGGLPTTTLTNGGGRGGRGGLLPRGRQMQKTFNNIK. Over residues 26–37 the composition is skewed to gly residues; that stretch reads NGGGRGGRGGLL. A helical; Signal-anchor for type II membrane protein transmembrane segment spans residues 52 to 72; it reads ITILCGFVTILVLRGTIGVGN. At 73-457 the chain is on the lumenal side; it reads LGSSSADAVN…RTPVETKPQN (385 aa). A disordered region spans residues 97–116; the sequence is RSDSDPTDLDEPQEGDMNPN. Positions 101–110 are enriched in acidic residues; that stretch reads DPTDLDEPQE. N-linked (GlcNAc...) asparagine glycans are attached at residues Asn116 and Asn432.

This sequence belongs to the glycosyltransferase 34 family. Interacts with XXT2 and CSLC4. Interacts with FUT1 and XLT2. In terms of tissue distribution, highly expressed in roots, stems and cauline leaves, and at lower levels in rosette leaves, flowers and siliques.

The protein localises to the golgi apparatus membrane. It carries out the reaction Transfers an alpha-D-xylosyl residue from UDP-D-xylose to a glucose residue in xyloglucan, forming an alpha-(1-&gt;6)-D-xylosyl-D-glucose linkage.. Its function is as follows. Probable xyloglucan xylosyltransferase involved in the biosynthesis of xyloglucan in roots. May act in association with XXT1 and XXT2. Associates with other xyloglucan-synthesizing enzymes to form multiprotein complexes for xyloglucan synthesis in the Golgi. The chain is Probable xyloglucan 6-xylosyltransferase 5 from Arabidopsis thaliana (Mouse-ear cress).